Here is a 414-residue protein sequence, read N- to C-terminus: Voltage-gated ClC-type chloride channel ClcB (414 aa).

The next 11 helical transmembrane spans lie at 5–25 (LVISIMLGMVSALIVWLFHQA), 54–74 (ALTPALGGLAAGLLLWAYQRY), 116–136 (SAIGREGAMVLLAALFASVFA), 147–167 (LWVACGAAAGMASAYHAPLAG), 169–189 (LFIAEILFGTLMLASLGPVVI), 220–240 (VQYFLMALLGLMAGFSGPLFL), 255–275 (LLPPLQLALGGIIVGLLSLIF), 292–312 (TPPGVLLIGGILICKLLAVLA), 327–347 (LFVGAALGMLCGQIFSLWPVL), 353–373 (LLMALTGMATLLAATTHAPIM), and 381–401 (MTGEYTLLPGLLLSCVIATTI).

This sequence belongs to the chloride channel (TC 2.A.49) family. ClcB subfamily.

It localises to the cell inner membrane. Probably acts as an electrical shunt for an outwardly-directed proton pump that is linked to amino acid decarboxylation, as part of the extreme acid resistance (XAR) response. In Yersinia pseudotuberculosis serotype O:1b (strain IP 31758), this protein is Voltage-gated ClC-type chloride channel ClcB.